Consider the following 346-residue polypeptide: Transposase for insertion sequence element IS1533 (346 aa).

It belongs to the transposase IS1111A/IS1328/IS1533 family.

Required for the transposition of the insertion element. The sequence is that of Transposase for insertion sequence element IS1533 (tnhA) from Leptospira borgpetersenii.